The following is a 188-amino-acid chain: dCTP deaminase (188 aa).

DCTP-binding positions include 111–116 (KSTYAR), 135–137 (TLE), glutamine 156, tyrosine 170, and glutamine 180. The active-site Proton donor/acceptor is the glutamate 137.

Belongs to the dCTP deaminase family. Homotrimer.

The catalysed reaction is dCTP + H2O + H(+) = dUTP + NH4(+). Its pathway is pyrimidine metabolism; dUMP biosynthesis; dUMP from dCTP (dUTP route): step 1/2. Catalyzes the deamination of dCTP to dUTP. In Neisseria meningitidis serogroup C / serotype 2a (strain ATCC 700532 / DSM 15464 / FAM18), this protein is dCTP deaminase.